The following is a 1049-amino-acid chain: Probable ATP-dependent permease (1049 aa).

The N-terminal stretch at 1-25 (MGSHRRYLYYSILSFLLLSCSVVLA) is a signal peptide. Residues 26–324 (KQDKTPFFEG…KDPTVSWQGK (299 aa)) are Lumenal-facing. Asparagine 50, asparagine 114, asparagine 165, and asparagine 221 each carry an N-linked (GlcNAc...) asparagine glycan. Residues 325–345 (LVLALTAVMVLALFTFATFYI) traverse the membrane as a helical segment. Over 346-463 (SKSPLFRNGL…ISMDRKSFSK (118 aa)) the chain is Cytoplasmic. Positions 384-631 (LSFENITYSV…LRNEGYICPD (248 aa)) constitute an ABC transporter domain. 423–430 (GGSGAGKT) contributes to the ATP binding site. A helical membrane pass occupies residues 464–481 (IIGFVDQDDFLLPTLTVF). At 482-793 (ETVLNSALLR…SFKNMYRNPK (312 aa)) the chain is on the lumenal side. A phosphoserine mark is found at serine 659 and serine 702. The ABC transmembrane type-2 domain occupies 793–1044 (KLLLGNYLLT…IMGYLALKWI (252 aa)). The helical transmembrane segment at 794-814 (LLLGNYLLTILLSLFLGTLYY) threads the bilayer. The Cytoplasmic segment spans residues 815–828 (NVSNDISGFQNRMG). The helical transmembrane segment at 829–849 (LFFFILTYFGFVTFTGLSSFA) threads the bilayer. Residues 850 to 877 (LERIIFIKERSNNYYSPLAYYISKIMSE) lie on the Lumenal side of the membrane. The chain crosses the membrane as a helical span at residues 878–898 (VVPLRVVPPILLSLIVYPMTG). At 899–909 (LNMKDNAFFKC) the chain is on the cytoplasmic side. A helical membrane pass occupies residues 910–930 (IGILILFNLGISLEILTIGII). Residues 931–937 (FEDLNNS) lie on the Lumenal side of the membrane. A glycan (N-linked (GlcNAc...) asparagine) is linked at asparagine 935. The chain crosses the membrane as a helical span at residues 938–958 (IILSVLVLLGSLLFSGLFINT). At 959–1000 (KNITNVAFKYLKNFSVFYYAYESLLINEVKTLMLKERKYGLN) the chain is on the cytoplasmic side. Residues 1001-1021 (IEVPGATILSTFGFVVQNLVF) form a helical membrane-spanning segment. The Lumenal segment spans residues 1022 to 1024 (DIK). The helical transmembrane segment at 1025-1045 (ILALFNVVFLIMGYLALKWIV) threads the bilayer. Topologically, residues 1046-1049 (VEQK) are cytoplasmic.

Belongs to the ABC transporter superfamily. ABCG family. Eye pigment precursor importer (TC 3.A.1.204) subfamily.

Its subcellular location is the endoplasmic reticulum membrane. This Saccharomyces cerevisiae (strain ATCC 204508 / S288c) (Baker's yeast) protein is Probable ATP-dependent permease (ADP1).